Consider the following 333-residue polypeptide: Fibronectin type III domain-containing protein 11 (333 aa).

One can recognise a Fibronectin type-III domain in the interval 212 to 310; sequence PVMFDRKESV…DSLTLHTRPG (99 aa). Positions 307–333 are disordered; sequence TRPGPPEGLAPSRLGKLGLSLTTPSER.

The sequence is that of Fibronectin type III domain-containing protein 11 from Bos taurus (Bovine).